A 340-amino-acid chain; its full sequence is Complement decay-accelerating factor (340 aa).

4 consecutive Sushi domains span residues 1–55 (VPNA…FCNR), 56–119 (SCEV…FCKK), 120–181 (KSCP…ECRE), and 182–244 (IYCP…ECRG). A disulfide bond links C24 and C53. N54 is a glycosylation site (N-linked (GlcNAc...) asparagine). 6 disulfide bridges follow: C57/C104, C88/C117, C122/C163, C149/C179, C184/C226, and C212/C242. N107 carries an N-linked (GlcNAc...) asparagine glycan. The interval 235–317 (WSGPPPECRG…SGTTSGTTSL (83 aa)) is disordered. Residues 246–268 (SLTSKVPPTVQKPTTVNVPTTEV) show a composition bias toward polar residues. Composition is skewed to low complexity over residues 269 to 287 (SPTS…AQAT) and 307 to 317 (GSGTTSGTTSL). S312 is lipidated: GPI-anchor amidated serine. A propeptide spans 313–340 (GTTSLLSGHKCFTLTGLLGTLVTMGLLT) (removed in mature form).

Belongs to the receptors of complement activation (RCA) family. As to quaternary structure, monomer (major form) and non-disulfide-linked, covalent homodimer (minor form). Interacts with ADGRE5. Post-translationally, the Ser/Thr-rich domain is heavily O-glycosylated.

It is found in the cell membrane. In terms of biological role, this protein recognizes C4b and C3b fragments that condense with cell-surface hydroxyl or amino groups when nascent C4b and C3b are locally generated during C4 and c3 activation. Interaction of daf with cell-associated C4b and C3b polypeptides interferes with their ability to catalyze the conversion of C2 and factor B to enzymatically active C2a and Bb and thereby prevents the formation of C4b2a and C3bBb, the amplification convertases of the complement cascade. Inhibits complement activation by destabilizing and preventing the formation of C3 and C5 convertases, which prevents complement damage. This chain is Complement decay-accelerating factor (CD55), found in Pongo pygmaeus (Bornean orangutan).